The chain runs to 473 residues: MPMVLLECDKDIPERQKHIYLKAPNEDTREFLPIANAATIPGTLSERGCLLRRKLVIGGVLKDTIQMIHGPLGCAYDTWHTKRYPTDNGHFNMKYVWSTDMKESHVVFGGEKRLEQRMHEAFDEMPDIKRMIVYTTCPTALIGDDIKAVAKKVMKERPDVDVFTVECPGFSGVSQSKGHHVLNIGWINEKVETMEKEITSEYTMNFIGDFNIQGDTQLLQTYWDRLGIQVVAHFTGNGTYDDLRCMHQAQLNVVNCARSSGYIANELKKRYGIPRLDIDSWGFSYMAEGIRKICAFFGIEEKGERLIAEEYAKWKPKLDWYKERLQGKKMAIWTGGPRLWHWTKSVEDDLGIQVVAMSSKFGHEEDFEKVIARGKEGTYYIDDGNELEFFEIIDLVKPDVIFTGPRVGELVKKLHIPYVNGHGYHNGPYMGFEGFVNLARDTYNAVHNPLRHLAAVDIRDSSQTTPVIVRGAA.

Residues C49, C74, and C137 each contribute to the [8Fe-7S] cluster site. C256 and H422 together coordinate [7Fe-V-9S-C-homocitryl] cluster.

It belongs to the NifD/NifK/NifE/NifN family. In terms of assembly, hexamer of two alpha, two beta, and two delta chains. [8Fe-7S] cluster is required as a cofactor. It depends on [7Fe-V-9S-C-homocitryl] cluster as a cofactor.

The enzyme catalyses N2 + 8 reduced [2Fe-2S]-[ferredoxin] + 16 ATP + 16 H2O = H2 + 8 oxidized [2Fe-2S]-[ferredoxin] + 2 NH4(+) + 16 ADP + 16 phosphate + 6 H(+). This vanadium-iron protein is part of the nitrogenase complex that catalyzes the key enzymatic reactions in nitrogen fixation. The polypeptide is Nitrogenase vanadium-iron protein alpha chain (vnfD) (Azotobacter chroococcum mcd 1).